A 97-amino-acid polypeptide reads, in one-letter code: Aspartyl/glutamyl-tRNA(Asn/Gln) amidotransferase subunit C (97 aa).

Belongs to the GatC family. In terms of assembly, heterotrimer of A, B and C subunits.

The catalysed reaction is L-glutamyl-tRNA(Gln) + L-glutamine + ATP + H2O = L-glutaminyl-tRNA(Gln) + L-glutamate + ADP + phosphate + H(+). It catalyses the reaction L-aspartyl-tRNA(Asn) + L-glutamine + ATP + H2O = L-asparaginyl-tRNA(Asn) + L-glutamate + ADP + phosphate + 2 H(+). In terms of biological role, allows the formation of correctly charged Asn-tRNA(Asn) or Gln-tRNA(Gln) through the transamidation of misacylated Asp-tRNA(Asn) or Glu-tRNA(Gln) in organisms which lack either or both of asparaginyl-tRNA or glutaminyl-tRNA synthetases. The reaction takes place in the presence of glutamine and ATP through an activated phospho-Asp-tRNA(Asn) or phospho-Glu-tRNA(Gln). The sequence is that of Aspartyl/glutamyl-tRNA(Asn/Gln) amidotransferase subunit C from Prochlorococcus marinus (strain MIT 9313).